A 178-amino-acid polypeptide reads, in one-letter code: Cytochrome b6-f complex iron-sulfur subunit (178 aa).

The helical transmembrane segment at leucine 20–methionine 42 threads the bilayer. The 97-residue stretch at lysine 65–valine 161 folds into the Rieske domain. [2Fe-2S] cluster is bound by residues cysteine 107, histidine 109, cysteine 125, and histidine 128. Cysteines 112 and 127 form a disulfide.

Belongs to the Rieske iron-sulfur protein family. The 4 large subunits of the cytochrome b6-f complex are cytochrome b6, subunit IV (17 kDa polypeptide, PetD), cytochrome f and the Rieske protein, while the 4 small subunits are PetG, PetL, PetM and PetN. The complex functions as a dimer. [2Fe-2S] cluster is required as a cofactor.

It is found in the cellular thylakoid membrane. It carries out the reaction 2 oxidized [plastocyanin] + a plastoquinol + 2 H(+)(in) = 2 reduced [plastocyanin] + a plastoquinone + 4 H(+)(out). Functionally, component of the cytochrome b6-f complex, which mediates electron transfer between photosystem II (PSII) and photosystem I (PSI), cyclic electron flow around PSI, and state transitions. This Prochlorococcus marinus subsp. pastoris (strain CCMP1986 / NIES-2087 / MED4) protein is Cytochrome b6-f complex iron-sulfur subunit.